Reading from the N-terminus, the 205-residue chain is Thiamine-phosphate synthase (205 aa).

4-amino-2-methyl-5-(diphosphooxymethyl)pyrimidine contacts are provided by residues 37-41 (QVREK) and asparagine 69. 2 residues coordinate Mg(2+): aspartate 70 and aspartate 89. Serine 108 serves as a coordination point for 4-amino-2-methyl-5-(diphosphooxymethyl)pyrimidine. 134-136 (TGS) serves as a coordination point for 2-[(2R,5Z)-2-carboxy-4-methylthiazol-5(2H)-ylidene]ethyl phosphate. Lysine 137 is a binding site for 4-amino-2-methyl-5-(diphosphooxymethyl)pyrimidine. Residues glycine 165 and 185–186 (IS) each bind 2-[(2R,5Z)-2-carboxy-4-methylthiazol-5(2H)-ylidene]ethyl phosphate.

This sequence belongs to the thiamine-phosphate synthase family. It depends on Mg(2+) as a cofactor.

It carries out the reaction 2-[(2R,5Z)-2-carboxy-4-methylthiazol-5(2H)-ylidene]ethyl phosphate + 4-amino-2-methyl-5-(diphosphooxymethyl)pyrimidine + 2 H(+) = thiamine phosphate + CO2 + diphosphate. The catalysed reaction is 2-(2-carboxy-4-methylthiazol-5-yl)ethyl phosphate + 4-amino-2-methyl-5-(diphosphooxymethyl)pyrimidine + 2 H(+) = thiamine phosphate + CO2 + diphosphate. It catalyses the reaction 4-methyl-5-(2-phosphooxyethyl)-thiazole + 4-amino-2-methyl-5-(diphosphooxymethyl)pyrimidine + H(+) = thiamine phosphate + diphosphate. The protein operates within cofactor biosynthesis; thiamine diphosphate biosynthesis; thiamine phosphate from 4-amino-2-methyl-5-diphosphomethylpyrimidine and 4-methyl-5-(2-phosphoethyl)-thiazole: step 1/1. In terms of biological role, condenses 4-methyl-5-(beta-hydroxyethyl)thiazole monophosphate (THZ-P) and 2-methyl-4-amino-5-hydroxymethyl pyrimidine pyrophosphate (HMP-PP) to form thiamine monophosphate (TMP). The polypeptide is Thiamine-phosphate synthase (Clostridium botulinum (strain Loch Maree / Type A3)).